A 176-amino-acid chain; its full sequence is NAD(P)H-quinone oxidoreductase subunit 6, chloroplastic (176 aa).

The next 5 membrane-spanning stretches (helical) occupy residues 10–30, 32–52, 61–81, 93–115, and 152–172; these read FLLV…VLLT, PIYS…FYIP, AQLL…VMFM, WTVG…ITTI, and FFLP…GAIA.

This sequence belongs to the complex I subunit 6 family. As to quaternary structure, NDH is composed of at least 16 different subunits, 5 of which are encoded in the nucleus.

Its subcellular location is the plastid. It localises to the chloroplast thylakoid membrane. It carries out the reaction a plastoquinone + NADH + (n+1) H(+)(in) = a plastoquinol + NAD(+) + n H(+)(out). It catalyses the reaction a plastoquinone + NADPH + (n+1) H(+)(in) = a plastoquinol + NADP(+) + n H(+)(out). In terms of biological role, NDH shuttles electrons from NAD(P)H:plastoquinone, via FMN and iron-sulfur (Fe-S) centers, to quinones in the photosynthetic chain and possibly in a chloroplast respiratory chain. The immediate electron acceptor for the enzyme in this species is believed to be plastoquinone. Couples the redox reaction to proton translocation, and thus conserves the redox energy in a proton gradient. The sequence is that of NAD(P)H-quinone oxidoreductase subunit 6, chloroplastic (ndhG) from Vitis vinifera (Grape).